Reading from the N-terminus, the 284-residue chain is Adenylate kinase 1, chloroplastic (284 aa).

Residues 1–36 (MARLVRVARSSSLFGFGNRFYSTSAEASHASSPSPF) constitute a chloroplast transit peptide. Position 61–66 (61–66 (GVGKGT)) interacts with ATP. Positions 81–110 (ATGDLVREELASSGPLSQKLSEIVNQGKLV) are NMP. AMP contacts are provided by residues T82, R87, 108-110 (KLV), 138-141 (GFPR), and Q145. Positions 174–222 (GRRTCSQCGKGFNVAHINLKGENGRPGISMDPLLPPHQCMSKLVTRADD) are LID. R175 lines the ATP pocket. Residues R219 and R230 each contribute to the AMP site. An ATP-binding site is contributed by G258.

Belongs to the adenylate kinase family. In terms of assembly, monomer. As to expression, highly expressed in flowers and at lower levels in roots, leaves and stems.

Its subcellular location is the plastid. It localises to the chloroplast stroma. It catalyses the reaction AMP + ATP = 2 ADP. Functionally, catalyzes the reversible transfer of the terminal phosphate group between ATP and AMP. Plays an important role in cellular energy homeostasis, adenine nucleotide metabolism and plant growth. This is Adenylate kinase 1, chloroplastic (ADK) from Arabidopsis thaliana (Mouse-ear cress).